The chain runs to 354 residues: MVNYSNCHFIKSPIHLENQKFGRRPGQSIKISPKLAQNGMVEVIGLDFLSSHYHALAAIQRLLTATNYKGNTKGVVLSRESNSFQFEGWIPRIRFTKTEFLEAYGVKRYKTSRNKYEFSGKEAETALEALYHLGHQPFLIVATRTRWTNGTQIVDRYQTLSPIIRIYEGWEGLTDEENIDIDLTPFNSPSTRKHKGFVVEPCPILVDQIESYFVIKPANVYQEIKMRFPNASKYAYTFIDWVITAAAKKRRKLTKDNSWPENLFLNVNVKSLAYILRMNRYICTRNWKKIELAIDKCIEIAIQLGWLSRRKRIEFLDSSKLSKKEILYLNKERFEEITKKSKEQMEQLEQESIN.

This is Virulence plasmid protein pGP2-D from Chlamydia trachomatis serovar L2 (strain ATCC VR-902B / DSM 19102 / 434/Bu).